A 463-amino-acid polypeptide reads, in one-letter code: Dipeptidyl peptidase 1 (463 aa).

A signal peptide spans 1–24 (MGPWSGSRLVALLLLVYGAGSVRG). N-linked (GlcNAc...) asparagine glycans are attached at residues Asn-29 and Asn-53. 2 disulfide bridges follow: Cys-30–Cys-118 and Cys-54–Cys-136. A propeptide spanning residues 135–230 (ACFTGRKTGN…TAEIQKKILH (96 aa)) is cleaved from the precursor. The N-linked (GlcNAc...) asparagine glycan is linked to Asn-144. Intrachain disulfides connect Cys-255-Cys-298, Cys-291-Cys-331, and Cys-321-Cys-337. Cys-258 is a catalytic residue. An N-linked (GlcNAc...) asparagine glycan is attached at Asn-276. Residues Phe-302 and Tyr-304 each coordinate chloride. Tyr-347 contributes to the chloride binding site. Catalysis depends on residues His-405 and Asn-427.

The protein belongs to the peptidase C1 family. Tetramer of heterotrimers consisting of exclusion domain, heavy- and light chains. It depends on chloride as a cofactor.

The protein resides in the lysosome. It carries out the reaction Release of an N-terminal dipeptide, Xaa-Yaa-|-Zaa-, except when Xaa is Arg or Lys, or Yaa or Zaa is Pro.. Thiol protease. Has dipeptidylpeptidase activity. Active against a broad range of dipeptide substrates composed of both polar and hydrophobic amino acids. Proline cannot occupy the P1 position and arginine cannot occupy the P2 position of the substrate. Can act as both an exopeptidase and endopeptidase. Activates serine proteases such as elastase, cathepsin G and granzymes A and B. The protein is Dipeptidyl peptidase 1 (CTSC) of Bos taurus (Bovine).